The sequence spans 210 residues: Glutathione S-transferase P (210 aa).

The GST N-terminal domain occupies 2–81 (PPYTIVYFPV…HLGRTLGLYG (80 aa)). Residue Tyr-4 is modified to Phosphotyrosine; by EGFR. Residues Tyr-8, Arg-14, Trp-39, Lys-45, and 52-53 (QL) contribute to the glutathione site. Thr-62 bears the Phosphothreonine mark. 65–66 (QS) serves as a coordination point for glutathione. The 122-residue stretch at 83-204 (DQQEAALVDM…ASPEHMNRPI (122 aa)) folds into the GST C-terminal domain. N6-succinyllysine occurs at positions 103 and 116. Residue Lys-128 is modified to N6-acetyllysine.

The protein belongs to the GST superfamily. Pi family. As to quaternary structure, homodimer. Interacts with CDK5.

The protein resides in the cytoplasm. Its subcellular location is the mitochondrion. It is found in the nucleus. The enzyme catalyses RX + glutathione = an S-substituted glutathione + a halide anion + H(+). It carries out the reaction prostaglandin J2 + glutathione = prostaglandin J2-S-(R)-glutathione. The catalysed reaction is prostaglandin J2 + glutathione = prostaglandin J2-S-(S)-glutathione. It catalyses the reaction prostaglandin A2 + glutathione = prostaglandin A2-S-(S)-glutathione. The enzyme catalyses 11(S)-hydroxy-14(S),15(S)-epoxy-(5Z,8Z,12E)-eicosatrienoate + glutathione = (11S,15S)-dihydroxy-14(R)-S-glutathionyl-(5Z,8Z,12E)-eicosatrienoate. Its function is as follows. Conjugation of reduced glutathione to a wide number of exogenous and endogenous hydrophobic electrophiles. Involved in the formation of glutathione conjugates of both prostaglandin A2 (PGA2) and prostaglandin J2 (PGJ2). Participates in the formation of novel hepoxilin regioisomers. Negatively regulates CDK5 activity via p25/p35 translocation to prevent neurodegeneration. The sequence is that of Glutathione S-transferase P (GSTP1) from Bos taurus (Bovine).